Consider the following 265-residue polypeptide: Cytochrome c oxidase subunit 3 (265 aa).

6 consecutive transmembrane segments (helical) span residues 16 to 36 (PWPI…VMYM), 41 to 61 (GGAT…FVWW), 84 to 104 (YGSI…FWAS), 162 to 182 (AVYA…FQGM), 200 to 220 (FLLA…FLIV), and 242 to 262 (AWYW…IYWW).

Belongs to the cytochrome c oxidase subunit 3 family. As to quaternary structure, component of the cytochrome c oxidase (complex IV, CIV), a multisubunit enzyme composed of a catalytic core of 3 subunits and several supernumerary subunits. The complex exists as a monomer or a dimer and forms supercomplexes (SCs) in the inner mitochondrial membrane with ubiquinol-cytochrome c oxidoreductase (cytochrome b-c1 complex, complex III, CIII).

It localises to the mitochondrion inner membrane. The enzyme catalyses 4 Fe(II)-[cytochrome c] + O2 + 8 H(+)(in) = 4 Fe(III)-[cytochrome c] + 2 H2O + 4 H(+)(out). In terms of biological role, component of the cytochrome c oxidase, the last enzyme in the mitochondrial electron transport chain which drives oxidative phosphorylation. The respiratory chain contains 3 multisubunit complexes succinate dehydrogenase (complex II, CII), ubiquinol-cytochrome c oxidoreductase (cytochrome b-c1 complex, complex III, CIII) and cytochrome c oxidase (complex IV, CIV), that cooperate to transfer electrons derived from NADH and succinate to molecular oxygen, creating an electrochemical gradient over the inner membrane that drives transmembrane transport and the ATP synthase. Cytochrome c oxidase is the component of the respiratory chain that catalyzes the reduction of oxygen to water. Electrons originating from reduced cytochrome c in the intermembrane space (IMS) are transferred via the dinuclear copper A center (CU(A)) of subunit 2 and heme A of subunit 1 to the active site in subunit 1, a binuclear center (BNC) formed by heme A3 and copper B (CU(B)). The BNC reduces molecular oxygen to 2 water molecules using 4 electrons from cytochrome c in the IMS and 4 protons from the mitochondrial matrix. The chain is Cytochrome c oxidase subunit 3 (COX3) from Zea mays (Maize).